The primary structure comprises 516 residues: Cytochrome P450 1A2 (516 aa).

The O-linked (GlcNAc) serine glycan is linked to serine 69. A substrate-binding site is contributed by phenylalanine 226. Cysteine 458 provides a ligand contact to heme.

The protein belongs to the cytochrome P450 family. Interacts with PGRMC1; the interaction requires PGRMC1 homodimerization. It depends on heme as a cofactor. In terms of tissue distribution, liver.

Its subcellular location is the endoplasmic reticulum membrane. It is found in the microsome membrane. It carries out the reaction an organic molecule + reduced [NADPH--hemoprotein reductase] + O2 = an alcohol + oxidized [NADPH--hemoprotein reductase] + H2O + H(+). The catalysed reaction is 17beta-estradiol + reduced [NADPH--hemoprotein reductase] + O2 = 2-hydroxy-17beta-estradiol + oxidized [NADPH--hemoprotein reductase] + H2O + H(+). The enzyme catalyses 17beta-estradiol + reduced [NADPH--hemoprotein reductase] + O2 = 4-hydroxy-17beta-estradiol + oxidized [NADPH--hemoprotein reductase] + H2O + H(+). It catalyses the reaction estrone + reduced [NADPH--hemoprotein reductase] + O2 = 2-hydroxyestrone + oxidized [NADPH--hemoprotein reductase] + H2O + H(+). It carries out the reaction estrone + reduced [NADPH--hemoprotein reductase] + O2 = 4-hydroxyestrone + oxidized [NADPH--hemoprotein reductase] + H2O + H(+). The catalysed reaction is cholesterol + reduced [NADPH--hemoprotein reductase] + O2 = 25-hydroxycholesterol + oxidized [NADPH--hemoprotein reductase] + H2O + H(+). The enzyme catalyses all-trans-retinol + reduced [NADPH--hemoprotein reductase] + O2 = all-trans-retinal + oxidized [NADPH--hemoprotein reductase] + 2 H2O + H(+). It catalyses the reaction all-trans-retinal + reduced [NADPH--hemoprotein reductase] + O2 = all-trans-retinoate + oxidized [NADPH--hemoprotein reductase] + H2O + 2 H(+). It carries out the reaction (5Z,8Z,11Z,14Z)-eicosatetraenoate + reduced [NADPH--hemoprotein reductase] + O2 = (14R,15S)-epoxy-(5Z,8Z,11Z)-eicosatrienoate + oxidized [NADPH--hemoprotein reductase] + H2O + H(+). The catalysed reaction is (5Z,8Z,11Z,14Z)-eicosatetraenoate + reduced [NADPH--hemoprotein reductase] + O2 = (14S,15R)-epoxy-(5Z,8Z,11Z)-eicosatrienoate + oxidized [NADPH--hemoprotein reductase] + H2O + H(+). The enzyme catalyses (5Z,8Z,11Z,14Z,17Z)-eicosapentaenoate + reduced [NADPH--hemoprotein reductase] + O2 = (17R,18S)-epoxy-(5Z,8Z,11Z,14Z)-eicosatetraenoate + oxidized [NADPH--hemoprotein reductase] + H2O + H(+). It catalyses the reaction (4Z,7Z,10Z,13Z,16Z,19Z)-docosahexaenoate + reduced [NADPH--hemoprotein reductase] + O2 = (19R,20S)-epoxy-(4Z,7Z,10Z,13Z,16Z)-docosapentaenoate + oxidized [NADPH--hemoprotein reductase] + H2O + H(+). It carries out the reaction (5S)-hydroperoxy-(6E,8Z,11Z,14Z)-eicosatetraenoate = 5-oxo-(6E,8Z,11Z,14Z)-eicosatetraenoate + H2O. The catalysed reaction is (12S)-hydroperoxy-(5Z,8Z,10E,14Z)-eicosatetraenoate = 12-oxo-(5Z,8Z,10E,14Z)-eicosatetraenoate + H2O. The enzyme catalyses (15S)-hydroperoxy-(5Z,8Z,11Z,13E)-eicosatetraenoate = 15-oxo-(5Z,8Z,11Z,13E)-eicosatetraenoate + H2O. It catalyses the reaction (13S)-hydroperoxy-(9Z,11E)-octadecadienoate = 13-oxo-(9Z,11E)-octadecadienoate + H2O. It carries out the reaction (5Z,8Z,11Z,14Z)-eicosatetraenoate + reduced [NADPH--hemoprotein reductase] + O2 = 13-hydroxy-(5Z,8Z,11Z,14Z)-eicosatetraenoate + oxidized [NADPH--hemoprotein reductase] + H2O + H(+). The catalysed reaction is (5Z,8Z,11Z,14Z)-eicosatetraenoate + reduced [NADPH--hemoprotein reductase] + O2 = 19-hydroxy-(5Z,8Z,11Z,14Z)-eicosatetraenoate + oxidized [NADPH--hemoprotein reductase] + H2O + H(+). The enzyme catalyses (9Z,12Z)-octadecadienoate + reduced [NADPH--hemoprotein reductase] + O2 = 11-hydroxy-(9Z,12Z)-octadecadienoate + oxidized [NADPH--hemoprotein reductase] + H2O + H(+). The protein operates within cofactor metabolism; retinol metabolism. Its pathway is steroid metabolism; cholesterol metabolism. It functions in the pathway lipid metabolism; arachidonate metabolism. A cytochrome P450 monooxygenase involved in the metabolism of various endogenous substrates, including fatty acids, steroid hormones and vitamins. Mechanistically, uses molecular oxygen inserting one oxygen atom into a substrate, and reducing the second into a water molecule, with two electrons provided by NADPH via cytochrome P450 reductase (NADPH--hemoprotein reductase). Catalyzes the hydroxylation of carbon-hydrogen bonds. Exhibits high catalytic activity for the formation of hydroxyestrogens from estrone (E1) and 17beta-estradiol (E2), namely 2-hydroxy E1 and E2. Metabolizes cholesterol toward 25-hydroxycholesterol, a physiological regulator of cellular cholesterol homeostasis. May act as a major enzyme for all-trans retinoic acid biosynthesis in the liver. Catalyzes two successive oxidative transformation of all-trans retinol to all-trans retinal and then to the active form all-trans retinoic acid. Primarily catalyzes stereoselective epoxidation of the last double bond of polyunsaturated fatty acids (PUFA), displaying a strong preference for the (R,S) stereoisomer. Catalyzes bisallylic hydroxylation and omega-1 hydroxylation of PUFA. May also participate in eicosanoids metabolism by converting hydroperoxide species into oxo metabolites (lipoxygenase-like reaction, NADPH-independent). Plays a role in the oxidative metabolism of xenobiotics. Catalyzes the N-hydroxylation of heterocyclic amines and the O-deethylation of phenacetin. Metabolizes caffeine via N3-demethylation. The protein is Cytochrome P450 1A2 of Homo sapiens (Human).